The chain runs to 427 residues: Phosphoglucosamine mutase (427 aa).

S94 functions as the Phosphoserine intermediate in the catalytic mechanism. Mg(2+) is bound by residues S94, D228, D230, and D232. A Phosphoserine modification is found at S94.

Belongs to the phosphohexose mutase family. Mg(2+) is required as a cofactor. Activated by phosphorylation.

It catalyses the reaction alpha-D-glucosamine 1-phosphate = D-glucosamine 6-phosphate. Catalyzes the conversion of glucosamine-6-phosphate to glucosamine-1-phosphate. The sequence is that of Phosphoglucosamine mutase from Thermotoga sp. (strain RQ2).